Here is a 568-residue protein sequence, read N- to C-terminus: Phosphoprotein (568 aa).

Disordered regions lie at residues 1-23 (MDQD…GGRE) and 38-320 (SEPT…GIGE). Over residues 7 to 20 (ILKEDSEVEREAPG) the composition is skewed to basic and acidic residues. Positions 33 to 41 (DAVLSSEPT) are N0 binding. The span at 50 to 59 (LHNTINTPQG) shows a compositional bias: polar residues. At Ser-68 the chain carries Phosphoserine; by host. Residues 83–101 (RSGEESRVSGRTSKPEAEA) are compositionally biased toward basic and acidic residues. Ser-125 is subject to Phosphoserine; by host. Basic and acidic residues predominate over residues 150 to 168 (GIEDENREMAAHPDKRGED). Over residues 191–206 (ASNNGRSMEPGSSHSA) the composition is skewed to polar residues. Phosphoserine; by host occurs at positions 192, 249, 257, and 260. The interval 344–411 (FESSRDASYV…SFRDTYKRFS (68 aa)) is multimerization. Positions 364–429 (YAEMTFNVCG…LLMSNLSTLH (66 aa)) form a coiled coil. Residues 412-445 (EYQKEQNSLLMSNLSTLHIITDRGGKTDNTDSLT) form a l protein binding region. A phosphoserine; by host mark is found at Ser-447 and Ser-449. The interval 479-568 (DLIREDEFRD…VEEDIESLTN (90 aa)) is interaction with the nucleocapsid (N-RNA). The interval 496 to 516 (QERDTEPRASNASRLLPSKEK) is disordered.

It belongs to the respirovirus P protein family. In terms of assembly, homotetramer. Interacts (via multimerization domain) with polymerase L; this interaction forms the polymerase complex. Interacts (via N-terminus) with N0; this interaction allows P to chaperon N0 before encapsidation and form the N-P complex. Interacts (via C-terminus) with N-RNA template; this interaction positions the polymerase on the template. Phosphorylated by PKC/PRKCZ, and other unknown kinases. Phosphorylation is necessary for viral transcription and replication. The N-terminus contains the majority of phosphorylated sites. Ser-249 is the major site of phosphorylation, but is not necessary for most functions.

Functionally, essential cofactor of the RNA polymerase L that plays a central role in the transcription and replication by forming the polymerase complex with RNA polymerase L and recruiting L to the genomic N-RNA template for RNA synthesis. Also plays a central role in the encapsidation of nascent RNA chains by forming the encapsidation complex with the nucleocapsid protein N (N-P complex). Acts as a chaperone for newly synthesized free N protein, so-called N0, allowing encapsidation of nascent RNA chains during replication. The nucleoprotein protein N prevents excessive phosphorylation of P, which leads to down-regulation of viral transcription/ replication. Participates, together with N, in the formation of viral factories (viroplasms), which are large inclusions in the host cytoplasm where replication takes place. Recruits host PI4KB and remodel the host endoplasmic reticulum membrane to form viral replication factories. In Sendai virus (strain Z) (SeV), this protein is Phosphoprotein (P/V/C).